A 304-amino-acid polypeptide reads, in one-letter code: Phosphate transport system permease protein PstA 1 (304 aa).

6 consecutive transmembrane segments (helical) span residues 36 to 56 (FFFT…WVVI), 96 to 116 (AGVA…YLVE), 132 to 152 (VLAG…WIAT), 155 to 175 (FQQS…PVVV), 204 to 224 (IVRI…LLSI), and 276 to 296 (WGAA…AAMI). Residues 89–297 (LYGTLVQAGV…TINLAAAMIR (209 aa)) form the ABC transmembrane type-1 domain.

It belongs to the binding-protein-dependent transport system permease family. CysTW subfamily.

It localises to the cell membrane. Part of the binding-protein-dependent transport system for phosphate; probably responsible for the translocation of the substrate across the membrane. This Mycobacterium tuberculosis (strain CDC 1551 / Oshkosh) protein is Phosphate transport system permease protein PstA 1 (pstA1).